A 182-amino-acid chain; its full sequence is Large ribosomal subunit protein uL10 (182 aa).

Belongs to the universal ribosomal protein uL10 family. In terms of assembly, part of the ribosomal stalk of the 50S ribosomal subunit. The N-terminus interacts with L11 and the large rRNA to form the base of the stalk. The C-terminus forms an elongated spine to which L12 dimers bind in a sequential fashion forming a multimeric L10(L12)X complex.

Forms part of the ribosomal stalk, playing a central role in the interaction of the ribosome with GTP-bound translation factors. In Koribacter versatilis (strain Ellin345), this protein is Large ribosomal subunit protein uL10.